The primary structure comprises 432 residues: Adenylosuccinate synthetase (432 aa).

Residues 13 to 19 (GDEGKGK) and 41 to 43 (GHT) contribute to the GTP site. The Proton acceptor role is filled by aspartate 14. Mg(2+) contacts are provided by aspartate 14 and glycine 41. Residues 14 to 17 (DEGK), 39 to 42 (NAGH), threonine 130, arginine 144, glutamine 225, threonine 240, and arginine 304 each bind IMP. The active-site Proton donor is histidine 42. Substrate is bound at residue 300–306 (AVTGRPR). Residues arginine 306, 332–334 (KLD), and 415–417 (STG) contribute to the GTP site.

It belongs to the adenylosuccinate synthetase family. Homodimer. The cofactor is Mg(2+).

It is found in the cytoplasm. The catalysed reaction is IMP + L-aspartate + GTP = N(6)-(1,2-dicarboxyethyl)-AMP + GDP + phosphate + 2 H(+). The protein operates within purine metabolism; AMP biosynthesis via de novo pathway; AMP from IMP: step 1/2. Plays an important role in the de novo pathway of purine nucleotide biosynthesis. Catalyzes the first committed step in the biosynthesis of AMP from IMP. This is Adenylosuccinate synthetase from Actinobacillus pleuropneumoniae serotype 5b (strain L20).